A 766-amino-acid chain; its full sequence is Single-minded homolog 1 (766 aa).

The region spanning Met1–Arg53 is the bHLH domain. 2 consecutive PAS domains span residues Gly77–His147 and Pro218–Gly288. Residues Thr292–Thr335 form the PAC domain. In terms of domain architecture, Single-minded C-terminal spans Glu336–Ser766. Positions Ala353–Thr365 are enriched in polar residues. 2 disordered regions span residues Ala353–Asp431 and Trp528–Lys563. The Nuclear localization signal signature appears at Arg368–Tyr387. The segment covering Ser373–Ser385 has biased composition (low complexity). Positions His394–Ser404 are enriched in basic and acidic residues.

As to quaternary structure, efficient DNA binding requires dimerization with another bHLH protein. Heterodimer; forms a heterodimer with ARNT, ARNT2.

It localises to the nucleus. Transcriptional factor that may have pleiotropic effects during embryogenesis and in the adult. The sequence is that of Single-minded homolog 1 (SIM1) from Pan paniscus (Pygmy chimpanzee).